The primary structure comprises 92 residues: Large ribosomal subunit protein eL43y (92 aa).

Residues 39–60 (CEFCGKYGVKRKAVGIWGCKDC) form a C4-type zinc finger.

Belongs to the eukaryotic ribosomal protein eL43 family.

In Arabidopsis thaliana (Mouse-ear cress), this protein is Large ribosomal subunit protein eL43y (RPL37AC).